The following is a 200-amino-acid chain: Holliday junction branch migration complex subunit RuvA (200 aa).

The tract at residues 1 to 64 is domain I; sequence MIAKLKGLLD…ENDMRLLGFA (64 aa). The domain II stretch occupies residues 65–143; it reads EASERDWFRL…ALPSAPGGAA (79 aa). Positions 144-154 are flexible linker; sequence MAANPAGGASA. The domain III stretch occupies residues 154–200; it reads ADAVSALENLGFKPAIAARAVATAQGELGEGASESELIRVALKRAAG.

This sequence belongs to the RuvA family. In terms of assembly, homotetramer. Forms an RuvA(8)-RuvB(12)-Holliday junction (HJ) complex. HJ DNA is sandwiched between 2 RuvA tetramers; dsDNA enters through RuvA and exits via RuvB. An RuvB hexamer assembles on each DNA strand where it exits the tetramer. Each RuvB hexamer is contacted by two RuvA subunits (via domain III) on 2 adjacent RuvB subunits; this complex drives branch migration. In the full resolvosome a probable DNA-RuvA(4)-RuvB(12)-RuvC(2) complex forms which resolves the HJ.

Its subcellular location is the cytoplasm. Its function is as follows. The RuvA-RuvB-RuvC complex processes Holliday junction (HJ) DNA during genetic recombination and DNA repair, while the RuvA-RuvB complex plays an important role in the rescue of blocked DNA replication forks via replication fork reversal (RFR). RuvA specifically binds to HJ cruciform DNA, conferring on it an open structure. The RuvB hexamer acts as an ATP-dependent pump, pulling dsDNA into and through the RuvAB complex. HJ branch migration allows RuvC to scan DNA until it finds its consensus sequence, where it cleaves and resolves the cruciform DNA. This chain is Holliday junction branch migration complex subunit RuvA, found in Erythrobacter litoralis (strain HTCC2594).